A 192-amino-acid chain; its full sequence is 7-methyl-GTP pyrophosphatase (192 aa).

Residue aspartate 69 is the Proton acceptor of the active site.

The protein belongs to the Maf family. YceF subfamily. A divalent metal cation serves as cofactor.

The protein resides in the cytoplasm. The catalysed reaction is N(7)-methyl-GTP + H2O = N(7)-methyl-GMP + diphosphate + H(+). Its function is as follows. Nucleoside triphosphate pyrophosphatase that hydrolyzes 7-methyl-GTP (m(7)GTP). May have a dual role in cell division arrest and in preventing the incorporation of modified nucleotides into cellular nucleic acids. This chain is 7-methyl-GTP pyrophosphatase, found in Pseudomonas aeruginosa (strain ATCC 15692 / DSM 22644 / CIP 104116 / JCM 14847 / LMG 12228 / 1C / PRS 101 / PAO1).